We begin with the raw amino-acid sequence, 331 residues long: Probable allantoicase (331 aa).

Belongs to the allantoicase family.

It carries out the reaction allantoate + H2O = (S)-ureidoglycolate + urea. It participates in nitrogen metabolism; (S)-allantoin degradation; (S)-ureidoglycolate from allantoate (aminidohydrolase route): step 1/1. This is Probable allantoicase from Pseudomonas fluorescens (strain SBW25).